The sequence spans 286 residues: Probable sulfate transport system permease protein cysT (286 aa).

7 helical membrane passes run 27-47 (PWQL…IALL), 77-97 (TALF…WVLV), 106-126 (IIDA…GLTL), 147-167 (VAFT…PFVV), 196-216 (FWRV…ALAF), 225-245 (SVVI…VLIF), and 257-277 (TIIG…INFI). The 202-residue stretch at 71–272 (YVVTLMTALF…ILSISLFLLF (202 aa)) folds into the ABC transmembrane type-1 domain.

Belongs to the binding-protein-dependent transport system permease family. CysTW subfamily.

Its subcellular location is the plastid. It is found in the chloroplast membrane. Functionally, part of the ABC transporter complex cysAWTP (TC 3.A.1.6.1) involved in sulfate/thiosulfate import. Probably responsible for the translocation of the substrate across the membrane. The polypeptide is Probable sulfate transport system permease protein cysT (cysT) (Chlorokybus atmophyticus (Soil alga)).